The chain runs to 244 residues: Lipoprotein-releasing system ATP-binding protein LolD (244 aa).

Residues 19–244 (IRAEALAKTY…KLRELAPSAV (226 aa)) enclose the ABC transporter domain. 55-62 (GASGAGKS) contacts ATP.

It belongs to the ABC transporter superfamily. Lipoprotein translocase (TC 3.A.1.125) family. In terms of assembly, the complex is composed of two ATP-binding proteins (LolD) and two transmembrane proteins (LolC and LolE).

The protein resides in the cell inner membrane. In terms of biological role, part of the ABC transporter complex LolCDE involved in the translocation of mature outer membrane-directed lipoproteins, from the inner membrane to the periplasmic chaperone, LolA. Responsible for the formation of the LolA-lipoprotein complex in an ATP-dependent manner. This chain is Lipoprotein-releasing system ATP-binding protein LolD, found in Xanthomonas euvesicatoria pv. vesicatoria (strain 85-10) (Xanthomonas campestris pv. vesicatoria).